A 344-amino-acid polypeptide reads, in one-letter code: MMAPKSLQTGLLILLLAKLKLAWGMTLVPRQVTCDYEAAASSGDTCTSFAAEWGLTEETFASLNPSAACPSLVAGQNYCMVGTISAASTTSSSSSTTSSSTTSSSTTSSSTTSSSTTTSSFTTTTASETTSTAANGVTTPMPVQSGMIDSCSKFDLIKSGDTCASIASTYNIDLSSFYSWNPAVGSSCAYLDVGYYVCVDAVPSPVQSGITESCSKFDLVESGDTCASIVSTYNIPLSSFYAWNPAVGSSCAYLDLGYYVCVGTDSSTVATSTTSAGNGITTPTPDEPGMVSDCTKFWLVGSDDTCTSIASSEDITVADIEKWNPKVGSTCTDVWLGDYICVGV.

The signal sequence occupies residues 1–24 (MMAPKSLQTGLLILLLAKLKLAWG). One can recognise a LysM 1 domain in the interval 36 to 80 (YEAAASSGDTCTSFAAEWGLTEETFASLNPSAACPSLVAGQNYCM). The segment covering 88 to 134 (STTSSSSSTTSSSTTSSSTTSSSTTSSSTTTSSFTTTTASETTSTAA) has biased composition (low complexity). The segment at 88–141 (STTSSSSSTTSSSTTSSSTTSSSTTSSSTTTSSFTTTTASETTSTAANGVTTPM) is disordered. 3 consecutive LysM domains span residues 153–199 (KFDL…YVCV), 216–262 (KFDL…YVCV), and 296–342 (KFWL…YICV).

This sequence belongs to the secreted LysM effector family.

In terms of biological role, might have a role in sequestration of chitin oligosaccharides (breakdown products of fungal cell walls that are released during invasion and act as triggers of host immunity) to dampen host defense. This is Secreted LysM effector LysM2 from Penicillium expansum (Blue mold rot fungus).